The primary structure comprises 244 residues: uncharacterized protein (244 aa).

The next 6 helical transmembrane spans lie at 21-41 (FPYS…YGIY), 44-64 (ALGF…AGSV), 66-86 (FIAA…LITL), 139-159 (WYMF…AAMG), 165-185 (VLPF…LVIF), and 199-219 (LLGL…YFLI).

Belongs to the AzlC family.

Its subcellular location is the cell membrane. This is an uncharacterized protein from Haemophilus influenzae (strain ATCC 51907 / DSM 11121 / KW20 / Rd).